A 534-amino-acid chain; its full sequence is Prolyl 4-hydroxylase subunit alpha-1 (534 aa).

The N-terminal stretch at M1–A17 is a signal peptide. The N-linked (GlcNAc...) asparagine glycan is linked to N113. The TPR repeat unit spans residues V205–H238. Residue N259 is glycosylated (N-linked (GlcNAc...) asparagine). The Fe2OG dioxygenase domain maps to T411–E519. Fe cation contacts are provided by H429, D431, and H500. K510 lines the 2-oxoglutarate pocket.

The protein belongs to the P4HA family. As to quaternary structure, heterotetramer of two alpha-1 chains and two beta chains (P4HB)(the beta chain is the multi-functional PDI), where P4HB plays the role of a structural subunit; this tetramer catalyzes the formation of 4-hydroxyproline in collagen. Fe(2+) serves as cofactor. It depends on L-ascorbate as a cofactor. In terms of tissue distribution, expressed at least in brain, heart and lung.

It localises to the endoplasmic reticulum lumen. The catalysed reaction is L-prolyl-[collagen] + 2-oxoglutarate + O2 = trans-4-hydroxy-L-prolyl-[collagen] + succinate + CO2. Inhibited by poly(L-proline). In terms of biological role, catalyzes the post-translational formation of 4-hydroxyproline in -Xaa-Pro-Gly- sequences in collagens and other proteins. In Mus musculus (Mouse), this protein is Prolyl 4-hydroxylase subunit alpha-1 (P4ha1).